The primary structure comprises 682 residues: MKKINAGNLFAGMRSSSVIAGLFIVLIVSIVLLFANFAYLNTQSNHDKQYIGHAGELRVLSQRIAKNATEAAAGKGEAFKLLKDARNDFEKRWNILVNGDESTSLPPSPEAVKPQMDVVQQDWDGLRKNADSILASEQTVLSLHQVASTLAETIPQLQVEYEEVVDILLENGAPADQVAVAQRQSLLAERILGSVNKVLAGDENSVQAADSFGRDASLFGRVLKGMQEGNAAMSISKVTNAEAVDRLNEIAELFEFVSGSVDEILETSPDLFQVREAANNIFSVSQTLLDKASQLADGFENLAGGRSINLFAGYALGALALASIILIGLVMVRETNRRLAETAEKNDRNQAAILRLLDEIADLADGDLTVAATVTEDFTGAIADSINYSIDQLRELVETINQTAVQVAAAAQETQSTAMHLAEASEHQAQEIAGASAAINEMAVSIDQVSANASESSAVAERSVAIANKGNEVVHNTITGMDNIREQIQDTSKRIKRLGESSQEIGDIVSLINDIADQTNILALNAAIQASMAGDAGRGFAVVADEVQRLAERSSAATKQIEALVKTIQTDTNEAVISMEQTTSEVVRGARLAQDAGVALEEIEKVSKTLAALIQNISNAARQQASSAGHISNTMNVIQEITSQTSAGTTATARSIGNLAKMASEMRNSVSGFKLPEGVEQA.

Over 1–14 (MKKINAGNLFAGMR) the chain is Cytoplasmic. The helical transmembrane segment at 15 to 38 (SSSVIAGLFIVLIVSIVLLFANFA) threads the bilayer. At 39 to 306 (YLNTQSNHDK…DGFENLAGGR (268 aa)) the chain is on the periplasmic side. The helical transmembrane segment at 307-333 (SINLFAGYALGALALASIILIGLVMVR) threads the bilayer. The Cytoplasmic portion of the chain corresponds to 334-682 (ETNRRLAETA…FKLPEGVEQA (349 aa)). One can recognise an HAMP domain in the interval 347–398 (DRNQAAILRLLDEIADLADGDLTVAATVTEDFTGAIADSINYSIDQLRELVE). The Methyl-accepting transducer domain maps to 403–639 (TAVQVAAAAQ…HISNTMNVIQ (237 aa)).

The protein belongs to the methyl-accepting chemotaxis (MCP) protein family.

The protein resides in the cell inner membrane. In terms of biological role, may be a part of a signal-transduction system that regulates twitching motility by controlling pilus function (extension and retraction). This chain is Protein PilJ (pilJ), found in Pseudomonas aeruginosa (strain ATCC 15692 / DSM 22644 / CIP 104116 / JCM 14847 / LMG 12228 / 1C / PRS 101 / PAO1).